The primary structure comprises 187 residues: Small ribosomal subunit protein uS5 (187 aa).

An S5 DRBM domain is found at 21 to 84 (MVDKLVHINR…ESAKRDMIFV (64 aa)).

It belongs to the universal ribosomal protein uS5 family. As to quaternary structure, part of the 30S ribosomal subunit. Contacts proteins S4 and S8.

Functionally, with S4 and S12 plays an important role in translational accuracy. In terms of biological role, located at the back of the 30S subunit body where it stabilizes the conformation of the head with respect to the body. The sequence is that of Small ribosomal subunit protein uS5 from Mesorhizobium japonicum (strain LMG 29417 / CECT 9101 / MAFF 303099) (Mesorhizobium loti (strain MAFF 303099)).